The chain runs to 487 residues: GDP-Man:Man(3)GlcNAc(2)-PP-Dol alpha-1,2-mannosyltransferase (487 aa).

The Lumenal segment spans residues 1–16 (MAGILCLCGMMRLLTA). The helical transmembrane segment at 17-37 (LFIPVLIASIGLCLVLVLLFI) threads the bilayer. Topologically, residues 38–231 (CTRLWIQRKK…SNNPVLSRLK (194 aa)) are cytoplasmic. The helical intramembrane region spans 232–252 (LIYYYLFAVIYGWVGSCSDVI). Residues 253–394 (MVNSTWTFAH…IGLHTMWNEH (142 aa)) lie on the Cytoplasmic side of the membrane. An intramembrane region (helical) is located at residues 395-415 (FGIGIVECMAAGTIILAHNSG). Residues 416 to 487 (GPKLDIVVPY…FLASSEPLFM (72 aa)) lie on the Cytoplasmic side of the membrane.

This sequence belongs to the glycosyltransferase group 1 family. Glycosyltransferase 4 subfamily.

Its subcellular location is the endoplasmic reticulum membrane. The catalysed reaction is an alpha-D-Man-(1-&gt;3)-[alpha-D-Man-(1-&gt;6)]-beta-D-Man-(1-&gt;4)-beta-D-GlcNAc-(1-&gt;4)-alpha-D-GlcNAc-diphospho-di-trans,poly-cis-dolichol + 2 GDP-alpha-D-mannose = an alpha-D-Man-(1-&gt;2)-alpha-D-Man-(1-&gt;2)-alpha-D-Man-(1-&gt;3)-[alpha-D-Man-(1-&gt;6)]-beta-D-Man-(1-&gt;4)-beta-D-GlcNAc-(1-&gt;4)-alpha-D-GlcNAc-diphospho-di-trans,poly-cis-dolichol + 2 GDP + 2 H(+). It functions in the pathway protein modification; protein glycosylation. Functionally, GDP-Man:Man(3)GlcNAc(2)-PP-Dol alpha-1,2-mannosyltransferase that operates in the biosynthetic pathway of dolichol-linked oligosaccharides, the glycan precursors employed in protein asparagine (N)-glycosylation. The assembly of dolichol-linked oligosaccharides begins on the cytosolic side of the endoplasmic reticulum membrane and finishes in its lumen. The sequential addition of sugars to dolichol pyrophosphate produces dolichol-linked oligosaccharides containing fourteen sugars, including two GlcNAcs, nine mannoses and three glucoses. Once assembled, the oligosaccharide is transferred from the lipid to nascent proteins by oligosaccharyltransferases. Catalyzes, on the cytoplasmic face of the endoplasmic reticulum, the addition of the fourth and fifth mannose residues to the dolichol-linked oligosaccharide chain, to produce Man(5)GlcNAc(2)-PP-dolichol core oligosaccharide. Man(5)GlcNAc(2)-PP-dolichol is a substrate for ALG3, the following enzyme in the biosynthetic pathway. This Xenopus tropicalis (Western clawed frog) protein is GDP-Man:Man(3)GlcNAc(2)-PP-Dol alpha-1,2-mannosyltransferase (alg11).